Reading from the N-terminus, the 146-residue chain is Large ribosomal subunit protein uL15 (146 aa).

Basic and acidic residues predominate over residues 1–13 (MKLNELKPNEGSR). Residues 1-54 (MKLNELKPNEGSRRNRKRVGRGTSSGYGKTAGRGQKGQLARTGGKTRLGFEGGQ) are disordered. Gly residues predominate over residues 23–35 (TSSGYGKTAGRGQ).

It belongs to the universal ribosomal protein uL15 family. As to quaternary structure, part of the 50S ribosomal subunit.

Functionally, binds to the 23S rRNA. The protein is Large ribosomal subunit protein uL15 of Lactobacillus gasseri (strain ATCC 33323 / DSM 20243 / BCRC 14619 / CIP 102991 / JCM 1131 / KCTC 3163 / NCIMB 11718 / NCTC 13722 / AM63).